Here is a 437-residue protein sequence, read N- to C-terminus: 5-hydroxytryptamine receptor 3B (437 aa).

The N-terminal stretch at 1–21 is a signal peptide; sequence MILLWSCLLVAVVGILGTATP. At 22-235 the chain is on the extracellular side; sequence QPGNSSLHRL…RFNVVIRRCP (214 aa). N-linked (GlcNAc...) asparagine glycans are attached at residues Asn-25, Asn-92, and Asn-134. Cys-151 and Cys-165 are oxidised to a cystine. A helical transmembrane segment spans residues 236-255; the sequence is LAYVVSLLIPSIFLMLVDLG. Over 256-266 the chain is Cytoplasmic; the sequence is SFYLPPNCRAR. A helical membrane pass occupies residues 267 to 284; that stretch reads IVFKTNVLVGYTVFRVNM. Over 285–295 the chain is Extracellular; it reads SDEVPRSAGCT. A helical membrane pass occupies residues 296-324; that stretch reads SLIGVFFTVCMALLVLSLSKSILLIKFLY. Residues 325 to 410 are Cytoplasmic-facing; sequence EERHSEQERP…WLAILCHFDQ (86 aa). The segment at 377 to 409 is HA-stretch; determines single-channel conductance in 5-HT3 receptors; it reads FWFQLQSINNSLRTRDQVYQKEVEWLAILCHFD. The chain crosses the membrane as a helical span at residues 411–434; sequence LLFRIYLAVLGLYTVTLCSLWALW. Over 435–437 the chain is Extracellular; it reads SRM.

Belongs to the ligand-gated ion channel (TC 1.A.9) family. 5-hydroxytryptamine receptor (TC 1.A.9.2) subfamily. HTR3B sub-subfamily. Forms homopentameric as well as heteropentameric serotonin-activated cation-selective channel complexes with HTR3A. The homomeric complex is not functional. Heteropentameric complexes display properties which resemble that of neuronal serotonin-activated channels in vivo. N-glycosylation is required for membrane localization. Expressed in peripheral neurons, but not in neurons of the central nervous system.

The protein localises to the postsynaptic cell membrane. It localises to the cell membrane. It catalyses the reaction Na(+)(in) = Na(+)(out). The enzyme catalyses K(+)(in) = K(+)(out). It carries out the reaction Ca(2+)(in) = Ca(2+)(out). Its function is as follows. Forms serotonin (5-hydroxytryptamine/5-HT3)-activated cation-selective channel complexes, which when activated cause fast, depolarizing responses in neurons. The protein is 5-hydroxytryptamine receptor 3B of Rattus norvegicus (Rat).